Here is a 1640-residue protein sequence, read N- to C-terminus: MAQILPVRFQEHFQLQNLGINPANIGFSTLTMESDKFICIREKVGEQAQVTIIDMSDPMAPIRRPISAESAIMNPASKVIALKAGKTLQIFNIEMKSKMKAHTMAEEVIFWKWVSVNTVALVTETAVYHWSMEGDSQPMKMFDRHTSLVGCQVIHYRTDEYQKWLLLVGISAQQNRVVGAMQLYSVDRKVSQPIEGHAAAFAEFKMEGNAKPATLFCFAVRNPTGGKLHIIEVGQPAAGNQPFVKKAVDVFFPPEAQNDFPVAMQIGAKHGVIYLITKYGYLHLYDLESGVCICMNRISADTIFVTAPHKPTSGIIGVNKKGQVLSVCVEEDNIVNYATNVLQNPDLGLRLAVRSNLAGAEKLFVRKFNTLFAQGSYAEAAKVAASAPKGILRTRETVQKFQSIPAQSGQASPLLQYFGILLDQGQLNKLESLELCHLVLQQGRKQLLEKWLKEDKLECSEELGDLVKTTDPMLALSVYLRANVPSKVIQCFAETGQFQKIVLYAKKVGYTPDWIFLLRGVMKISPEQGLQFSRMLVQDEEPLANISQIVDIFMENSLIQQCTSFLLDALKNNRPAEGLLQTWLLEMNLVHAPQVADAILGNKMFTHYDRAHIAQLCEKAGLLQQALEHYTDLYDIKRAVVHTHLLNPEWLVNFFGSLSVEDSVECLHAMLSANIRQNLQLCVQVASKYHEQLGTQALVELFESFKSYKGLFYFLGSIVNFSQDPDVHLKYIQAACKTGQIKEVERICRESSCYNPERVKNFLKEAKLTDQLPLIIVCDRFGFVHDLVLYLYRNNLQRYIEIYVQKVNPSRTPAVIGGLLDVDCSEEVIKHLIMAVRGQFSTDELVAEVEKRNRLKLLLPWLESQIQEGCEEPATHNALAKIYIDSNNSPECFLRENAYYDSSVVGRYCEKRDPHLACVAYERGQCDLELIKVCNENSLFKSEARYLVCRKDPELWAHVLEETNPSRRQLIDQVVQTALSETRDPEEISVTVKAFMTADLPNELIELLEKIVLDNSVFSEHRNLQNLLILTAIKADRTRVMEYISRLDNYDALDIASIAVSSALYEEAFTVFHKFDMNASAIQVLIEHIGNLDRAYEFAERCNEPAVWSQLAQAQLQKDLVKEAINSYIRGDDPSSYLEVVQSASRSNNWEDLVKFLQMARKKGRESYIETELIFALAKTSRVSELEDFINGPNNAHIQQVGDRCYEEGMYEAAKLLYSNVSNFARLASTLVHLGEYQAAVDNSRKASSTRTWKEVCFACMDGQEFRFAQLCGLHIVIHADELEELMCYYQDRGYFEELILLLEAALGLERAHMGMFTELAILYSKFKPQKMLEHLELFWSRVNIPKVLRAAEQAHLWAELVFLYDKYEEYDNAVLTMMSHPTEAWKEGQFKDIITKVANVELCYRALQFYLDYKPLLINDLLLVLSPRLDHTWTVSFFSKAGQLPLVKPYLRSVQSHNNKSVNEALNHLLTEEEDYQGLRASIDAYDNFDNISLAQQLEKHQLMEFRCIAAYLYKGNNWWAQSVELCKKDHLYKDAMQHAAESRDAELAQKLLQWFLEEGKRECFAACLFTCYDLLRPDMVLELAWRHNLVDLAMPYFIQVMREYLSKVDKLDALESLRKQEEHVTEPAPLVFDFDGHE.

Ala2 is subject to N-acetylalanine. The interval 2–479 is globular terminal domain; sequence AQILPVRFQE…TDPMLALSVY (478 aa). WD40-like repeat regions lie at residues 24–67, 68–107, 108–149, 150–195, 196–257, 258–301, and 302–330; these read NIGF…RPIS, AESAIMNPASKVIALKAGKTLQIFNIEMKSKMKAHTMAEE, VIFW…TSLV, GCQV…QPIE, GHAA…PEAQ, NDFP…ISAD, and TIFVTAPHKPTSGIIGVNKKGQVLSVCVE. Phosphoserine is present on Ser67. Phosphotyrosine is present on Tyr184. The residue at position 394 (Thr394) is a Phosphothreonine. The binding site for the uncoating ATPase, involved in lattice disassembly stretch occupies residues 449–465; that stretch reads EKWLKEDKLECSEELGD. Residues 480 to 523 are flexible linker; that stretch reads LRANVPSKVIQCFAETGQFQKIVLYAKKVGYTPDWIFLLRGVMK. The distal segment stretch occupies residues 524 to 634; the sequence is ISPEQGLQFS…QALEHYTDLY (111 aa). A heavy chain arm region spans residues 524–1640; that stretch reads ISPEQGLQFS…PLVFDFDGHE (1117 aa). CHCR repeat units lie at residues 537 to 683, 686 to 828, 833 to 972, 979 to 1124, 1128 to 1269, 1274 to 1420, and 1423 to 1566; these read VQDE…QLCV, ASKY…SEEV, IMAV…QLID, LSET…VKEA, YIRG…FRFA, LHIV…LLIN, and LLVL…RECF. Tyr634 carries the post-translational modification Phosphotyrosine. Residues 639 to 1640 form a proximal segment region; sequence AVVHTHLLNP…PLVFDFDGHE (1002 aa). At Lys737 the chain carries N6-succinyllysine. Position 856 is an N6-acetyllysine (Lys856). A Phosphotyrosine modification is found at Tyr899. Ser1167 bears the Phosphoserine mark. Tyr1206 carries the phosphotyrosine modification. The interval 1213 to 1522 is involved in binding clathrin light chain; the sequence is AAKLLYSNVS…YLYKGNNWWA (310 aa). Ser1229 is modified (phosphoserine). Lys1441 is modified (N6-acetyllysine; alternate). Lys1441 carries the N6-succinyllysine; alternate modification. A phosphotyrosine mark is found at Tyr1477 and Tyr1487. Ser1494 carries the post-translational modification Phosphoserine. An N6-acetyllysine modification is found at Lys1501. Positions 1551-1640 are trimerization; it reads QKLLQWFLEE…PLVFDFDGHE (90 aa).

This sequence belongs to the clathrin heavy chain family. As to quaternary structure, clathrin triskelions, composed of 3 heavy chains and 3 light chains, are the basic subunits of the clathrin coat. In the presence of light chains, hub assembly is influenced by both the pH and the concentration of calcium. May interact with OCRL. Interacts with AFTPH/aftiphilin. In terms of tissue distribution, maximal levels in skeletal muscle. High levels in heart and testis. Low expression detected in all other tissues.

Its subcellular location is the cytoplasmic vesicle membrane. It is found in the membrane. The protein localises to the coated pit. Functionally, clathrin is the major protein of the polyhedral coat of coated pits and vesicles. Two different adapter protein complexes link the clathrin lattice either to the plasma membrane or to the trans-Golgi network. This chain is Clathrin heavy chain 2 (CLTCL1), found in Homo sapiens (Human).